A 255-amino-acid polypeptide reads, in one-letter code: uncharacterized protein (255 aa).

Disordered stretches follow at residues 112-145 and 157-183; these read CWPG…PSPG and GLAE…PDAQ.

This is an uncharacterized protein from Rhodospirillum rubrum.